A 331-amino-acid chain; its full sequence is (E)-beta farnesene synthase MBR_03882 (331 aa).

This sequence belongs to the trichodiene synthase family.

It catalyses the reaction (2E,6E)-farnesyl diphosphate = (E)-beta-farnesene + diphosphate. Functionally, terpene synthase that catalyzes the conversion of (2E,6E)-farnesyl diphosphate (FPP) into the volatile sesquiterpene (E)-beta-farnesene. This is (E)-beta farnesene synthase MBR_03882 from Metarhizium brunneum (strain ARSEF 3297).